Here is an 857-residue protein sequence, read N- to C-terminus: Major vault protein (857 aa).

MVP repeat units follow at residues 18–60, 62–122, 123–174, 175–227, 228–282, 284–332, 333–387, and 388–441; these read PYYY…ITIP, RHYC…KVVQ, ANAA…TIIR, PNQA…YVLT, EKNA…NTLT, RQYC…FILG, EDEG…IPLD, and ENEG…VAER. The segment at 434–453 is disordered; sequence AKDPVAERSDRRGDRAAPRA. The segment covering 437–453 has biased composition (basic and acidic residues); sequence PVAERSDRRGDRAAPRA. One can recognise an IQ domain in the interval 665–694; that stretch reads ARHEAERLEQEARGRLERQKIMDEAEAEKS.

In terms of assembly, the vault ribonucleoprotein particle is a huge (400 A x 670 A) cage structure of 12.9 MDa. It consists of a dimer of half-vaults, with each half-vault comprising 39 identical major vault protein (MVP) chains, PARP4 and one or more vault RNAs (vRNAs). Expressed in embryos, tube feet and coelomocytes (at protein level). Not expressed in sperm cells (at protein level).

The protein localises to the cytoplasm. It is found in the nucleus. Functionally, required for normal vault structure. Vaults are multi-subunit structures that may act as scaffolds for proteins involved in signal transduction. Vaults may also play a role in nucleo-cytoplasmic transport. The sequence is that of Major vault protein from Strongylocentrotus purpuratus (Purple sea urchin).